The chain runs to 276 residues: Adenylate kinase (276 aa).

51–56 provides a ligand contact to ATP; that stretch reads GAGKGT. The tract at residues 71–100 is NMP; it reads ATGDMLRSQVAKKTPLGQAAKKIMDAGGLV. Residues T72, R77, 98 to 100, 127 to 130, and Q134 each bind AMP; these read GLV and GFPR. The LID stretch occupies residues 168–205; that stretch reads GRLVHPASGRSYHVKFNPPKKEMTDDITGEPLIQRSDD. ATP is bound by residues R169 and 178–179; that span reads SY. Residues R202 and R213 each coordinate AMP. ATP is bound at residue Q241.

The protein belongs to the adenylate kinase family. AK2 subfamily. Monomer.

The protein resides in the cytoplasm. It is found in the cytosol. It localises to the mitochondrion intermembrane space. It carries out the reaction AMP + ATP = 2 ADP. Functionally, catalyzes the reversible transfer of the terminal phosphate group between ATP and AMP. Plays an important role in cellular energy homeostasis and in adenine nucleotide metabolism. Adenylate kinase activity is critical for regulation of the phosphate utilization and the AMP de novo biosynthesis pathways. The polypeptide is Adenylate kinase (Podospora anserina (strain S / ATCC MYA-4624 / DSM 980 / FGSC 10383) (Pleurage anserina)).